The sequence spans 90 residues: ATP synthase subunit c (90 aa).

2 helical membrane-spanning segments follow: residues 17-37 (PLAY…AGVV) and 70-90 (LAIV…IIFV).

It belongs to the ATPase C chain family. F-type ATPases have 2 components, F(1) - the catalytic core - and F(0) - the membrane proton channel. F(1) has five subunits: alpha(3), beta(3), gamma(1), delta(1), epsilon(1). F(0) has three main subunits: a(1), b(2) and c(10-14). The alpha and beta chains form an alternating ring which encloses part of the gamma chain. F(1) is attached to F(0) by a central stalk formed by the gamma and epsilon chains, while a peripheral stalk is formed by the delta and b chains.

It localises to the cell membrane. Its function is as follows. F(1)F(0) ATP synthase produces ATP from ADP in the presence of a proton or sodium gradient. F-type ATPases consist of two structural domains, F(1) containing the extramembraneous catalytic core and F(0) containing the membrane proton channel, linked together by a central stalk and a peripheral stalk. During catalysis, ATP synthesis in the catalytic domain of F(1) is coupled via a rotary mechanism of the central stalk subunits to proton translocation. Functionally, key component of the F(0) channel; it plays a direct role in translocation across the membrane. A homomeric c-ring of between 10-14 subunits forms the central stalk rotor element with the F(1) delta and epsilon subunits. This Metamycoplasma arthritidis (strain 158L3-1) (Mycoplasma arthritidis) protein is ATP synthase subunit c.